The chain runs to 245 residues: MRVGVLGAKGKVGATMVQAVEAADDLTFTTGVDAGDPLSALVDTRTDVVIDFTHPSVVMDNLKFLIDNGIHAVVGTTGFTDERISQVQDWLADKPESAVLIAPNFAIGAVLSMHFAQQAARFFESVEVIELHHPHKADAPSGTAARTAKLIAAARKDMPPNPDATSTGLEGARGADVDGIPVHSIRLAGLVAHQEVLFGTQGETLTIRHDSLDRTSFVPGVLLAVRKVSERPGLSVGIEPLLDLT.

NAD(+) contacts are provided by residues 7-12 (GAKGKV), 75-77 (GTT), and 102-105 (APNF). His-132 functions as the Proton donor/acceptor in the catalytic mechanism. His-133 provides a ligand contact to (S)-2,3,4,5-tetrahydrodipicolinate. The active-site Proton donor is Lys-136. 142 to 143 (GT) is a (S)-2,3,4,5-tetrahydrodipicolinate binding site.

It belongs to the DapB family.

The protein resides in the cytoplasm. It carries out the reaction (S)-2,3,4,5-tetrahydrodipicolinate + NAD(+) + H2O = (2S,4S)-4-hydroxy-2,3,4,5-tetrahydrodipicolinate + NADH + H(+). The catalysed reaction is (S)-2,3,4,5-tetrahydrodipicolinate + NADP(+) + H2O = (2S,4S)-4-hydroxy-2,3,4,5-tetrahydrodipicolinate + NADPH + H(+). It functions in the pathway amino-acid biosynthesis; L-lysine biosynthesis via DAP pathway; (S)-tetrahydrodipicolinate from L-aspartate: step 4/4. Its function is as follows. Catalyzes the conversion of 4-hydroxy-tetrahydrodipicolinate (HTPA) to tetrahydrodipicolinate. The chain is 4-hydroxy-tetrahydrodipicolinate reductase from Mycobacterium sp. (strain JLS).